Reading from the N-terminus, the 308-residue chain is tRNA pseudouridine synthase B (308 aa).

Catalysis depends on aspartate 47, which acts as the Nucleophile.

It belongs to the pseudouridine synthase TruB family. Type 1 subfamily.

The catalysed reaction is uridine(55) in tRNA = pseudouridine(55) in tRNA. In terms of biological role, responsible for synthesis of pseudouridine from uracil-55 in the psi GC loop of transfer RNAs. This is tRNA pseudouridine synthase B from Xanthomonas euvesicatoria pv. vesicatoria (strain 85-10) (Xanthomonas campestris pv. vesicatoria).